The chain runs to 188 residues: Thymidine kinase (188 aa).

17–24 (GPMFAGKT) is a binding site for ATP. Catalysis depends on Glu92, which acts as the Proton acceptor. Substrate is bound at residue Phe121. Zn(2+)-binding residues include Cys146 and Cys149. Residue 166–170 (LILAG) participates in substrate binding. Cys179 and Cys182 together coordinate Zn(2+).

The protein belongs to the thymidine kinase family.

It catalyses the reaction thymidine + ATP = dTMP + ADP + H(+). Functionally, phosphorylates thymidine. ASFV replicates in the cytoplasm of infected cells and contains genes encoding a number of enzymes needed for DNA synthesis, including thymidine kinase. Important for growth in swine macrophages in vitro and is a virus virulence factor in swine. In Ornithodoros (relapsing fever ticks), this protein is Thymidine kinase.